The sequence spans 156 residues: Ribonuclease P protein component (156 aa).

Positions 126-156 are disordered; that stretch reads GLRKLGVTPGGGRSPAPRAHSGARPRTDARS.

Belongs to the RnpA family. Consists of a catalytic RNA component (M1 or rnpB) and a protein subunit.

It catalyses the reaction Endonucleolytic cleavage of RNA, removing 5'-extranucleotides from tRNA precursor.. Its function is as follows. RNaseP catalyzes the removal of the 5'-leader sequence from pre-tRNA to produce the mature 5'-terminus. It can also cleave other RNA substrates such as 4.5S RNA. The protein component plays an auxiliary but essential role in vivo by binding to the 5'-leader sequence and broadening the substrate specificity of the ribozyme. The chain is Ribonuclease P protein component from Nocardia farcinica (strain IFM 10152).